Here is a 232-residue protein sequence, read N- to C-terminus: Flagellar L-ring protein (232 aa).

A signal peptide spans Met-1–Gly-21. The N-palmitoyl cysteine moiety is linked to residue Cys-22. Cys-22 carries the S-diacylglycerol cysteine lipid modification.

Belongs to the FlgH family. As to quaternary structure, the basal body constitutes a major portion of the flagellar organelle and consists of four rings (L,P,S, and M) mounted on a central rod.

It is found in the cell outer membrane. The protein localises to the bacterial flagellum basal body. Functionally, assembles around the rod to form the L-ring and probably protects the motor/basal body from shearing forces during rotation. The protein is Flagellar L-ring protein of Escherichia coli O6:H1 (strain CFT073 / ATCC 700928 / UPEC).